We begin with the raw amino-acid sequence, 144 residues long: UPF0102 protein sce2912 (144 aa).

It belongs to the UPF0102 family.

In Sorangium cellulosum (strain So ce56) (Polyangium cellulosum (strain So ce56)), this protein is UPF0102 protein sce2912.